An 82-amino-acid polypeptide reads, in one-letter code: MREVLILLIRFYRRFLSPLKPRTCRFHPTCSAYALEALERHGAFWGSYLAVRRVLRCHPWNPGGLDPVPVLFPPGKVRGGAE.

The protein belongs to the UPF0161 family.

Its subcellular location is the cell inner membrane. Functionally, could be involved in insertion of integral membrane proteins into the membrane. This chain is Putative membrane protein insertion efficiency factor, found in Thermus thermophilus (strain ATCC BAA-163 / DSM 7039 / HB27).